The primary structure comprises 190 residues: Zinc finger C2H2 protein ECU03_0790 (190 aa).

4 C2H2-type zinc fingers span residues arginine 4–histidine 27, tyrosine 33–histidine 55, tyrosine 85–histidine 108, and histidine 119–histidine 142.

This chain is Zinc finger C2H2 protein ECU03_0790, found in Encephalitozoon cuniculi (strain GB-M1) (Microsporidian parasite).